The primary structure comprises 177 residues: Ribosome maturation factor RimP (177 aa).

The protein belongs to the RimP family.

The protein resides in the cytoplasm. Its function is as follows. Required for maturation of 30S ribosomal subunits. This Methylibium petroleiphilum (strain ATCC BAA-1232 / LMG 22953 / PM1) protein is Ribosome maturation factor RimP.